Consider the following 93-residue polypeptide: Putative defensin-like protein 283 (93 aa).

Residues 1–24 (MTKIGFYLATYATIYIILSPGLLA) form the signal peptide. Cystine bridges form between Cys43/Cys83, Cys66/Cys90, and Cys72/Cys92.

The protein belongs to the DEFL family.

The protein localises to the secreted. The protein is Putative defensin-like protein 283 of Arabidopsis thaliana (Mouse-ear cress).